Reading from the N-terminus, the 240-residue chain is FMN-dependent NADH:quinone oxidoreductase 2 (240 aa).

FMN-binding positions include S10 and 23 to 25 (SIS).

Belongs to the azoreductase type 1 family. In terms of assembly, homodimer. FMN serves as cofactor.

The enzyme catalyses 2 a quinone + NADH + H(+) = 2 a 1,4-benzosemiquinone + NAD(+). It catalyses the reaction N,N-dimethyl-1,4-phenylenediamine + anthranilate + 2 NAD(+) = 2-(4-dimethylaminophenyl)diazenylbenzoate + 2 NADH + 2 H(+). In terms of biological role, quinone reductase that provides resistance to thiol-specific stress caused by electrophilic quinones. Functionally, also exhibits azoreductase activity. Catalyzes the reductive cleavage of the azo bond in aromatic azo compounds to the corresponding amines. This is FMN-dependent NADH:quinone oxidoreductase 2 from Idiomarina loihiensis (strain ATCC BAA-735 / DSM 15497 / L2-TR).